The sequence spans 249 residues: 4-hydroxy-tetrahydrodipicolinate reductase (249 aa).

NAD(+) is bound by residues 8–13 (GVTGQM), 87–89 (GTT), and 111–114 (ATNF). Histidine 143 serves as the catalytic Proton donor/acceptor. Histidine 144 is a binding site for (S)-2,3,4,5-tetrahydrodipicolinate. The active-site Proton donor is the lysine 147. (S)-2,3,4,5-tetrahydrodipicolinate is bound at residue 153–154 (GT).

It belongs to the DapB family.

It localises to the cytoplasm. The catalysed reaction is (S)-2,3,4,5-tetrahydrodipicolinate + NAD(+) + H2O = (2S,4S)-4-hydroxy-2,3,4,5-tetrahydrodipicolinate + NADH + H(+). It carries out the reaction (S)-2,3,4,5-tetrahydrodipicolinate + NADP(+) + H2O = (2S,4S)-4-hydroxy-2,3,4,5-tetrahydrodipicolinate + NADPH + H(+). Its pathway is amino-acid biosynthesis; L-lysine biosynthesis via DAP pathway; (S)-tetrahydrodipicolinate from L-aspartate: step 4/4. Functionally, catalyzes the conversion of 4-hydroxy-tetrahydrodipicolinate (HTPA) to tetrahydrodipicolinate. This Haloarcula marismortui (strain ATCC 43049 / DSM 3752 / JCM 8966 / VKM B-1809) (Halobacterium marismortui) protein is 4-hydroxy-tetrahydrodipicolinate reductase.